The following is a 257-amino-acid chain: Zinc uptake system ATP-binding protein ZurA (257 aa).

The region spanning 5–241 (IEVNNVSYHY…ADRELEILAE (237 aa)) is the ABC transporter domain. 37-44 (GPNGSGKS) provides a ligand contact to ATP.

Belongs to the ABC transporter superfamily.

Functionally, involved in a zinc uptake transport system. The polypeptide is Zinc uptake system ATP-binding protein ZurA (zurA) (Listeria monocytogenes serovar 1/2a (strain ATCC BAA-679 / EGD-e)).